The sequence spans 435 residues: Probable aminotransferase gliI (435 aa).

The residue at position 266 (Lys266) is an N6-(pyridoxal phosphate)lysine.

It belongs to the class-I pyridoxal-phosphate-dependent aminotransferase family. The cofactor is pyridoxal 5'-phosphate.

Its pathway is mycotoxin biosynthesis. Its function is as follows. Probable aminotransferase; part of the gene cluster that mediates the biosynthesis of gliotoxin, a member of the epipolythiodioxopiperazine (ETP) class of toxins characterized by a disulfide bridged cyclic dipeptide. The first step in gliotoxin biosynthesis is the condensation of serine and phenylalanine to form the cyclo-L-phenylalanyl-L-serine diketopiperazine (DKP) by the NRPS gliP. GliP is also able to produce the DKP cyclo-L-tryptophanyl-L-serine, suggesting that the substrate specificity of the first adenylation (A) domain in gliP is sufficiently relaxed to accommodate both L-Phe and L-Trp. The cytochrome P450 monooxygenase gliC has been shown to catalyze the subsequent hydroxylation of the alpha-carbon of L-Phe in cyclo-L-phenylalanyl-L-serine whereas the second cytochrome P450 enzyme, gliF, is presumably involved in the modification of the DKP side chain. The glutathione S-transferase (GST) gliG then forms a bis-glutathionylated biosynthetic intermediate which is responsible for the sulfurization of gliotoxin. This bis-glutathionylated intermediate is subsequently processed by the gamma-glutamyl cyclotransferase gliK to remove both gamma-glutamyl moieties. Subsequent processing via gliI yields a biosynthetic intermediate, which is N-methylated via the N-methyltransferase gliN, before the gliotoxin oxidoreductase gliT-mediated disulfide bridge closure. GliN-mediated amide methylation confers stability to ETP, damping the spontaneous formation of tri- and tetrasulfides. Intracellular dithiol gliotoxin oxidized by gliT is subsequently effluxed by gliA. Gliotoxin contributes to pathogenesis during invasive aspergillosis. In macrophages and neutrophils, gliotoxin showed inhibition of various different cell functions including cytokine production, antigen presentation, phagocytosis, and production of reactive oxygen species. The polypeptide is Probable aminotransferase gliI (Aspergillus fumigatus (strain ATCC MYA-4609 / CBS 101355 / FGSC A1100 / Af293) (Neosartorya fumigata)).